The following is a 206-amino-acid chain: Ribosome maturation factor RimP (206 aa).

It belongs to the RimP family.

The protein localises to the cytoplasm. Required for maturation of 30S ribosomal subunits. The protein is Ribosome maturation factor RimP of Paracoccus denitrificans (strain Pd 1222).